Reading from the N-terminus, the 540-residue chain is Chaperonin GroEL 2 (540 aa).

Residues Thr-29–Pro-32, Asp-86–Thr-90, Gly-413, and Asp-492 contribute to the ATP site. The interval Lys-521–Phe-540 is disordered. The segment covering Pro-530–Phe-540 has biased composition (gly residues).

It belongs to the chaperonin (HSP60) family. Forms a cylinder of 14 subunits composed of two heptameric rings stacked back-to-back. Interacts with the co-chaperonin GroES.

The protein resides in the secreted. It localises to the capsule. The protein localises to the cell surface. Its subcellular location is the cell wall. The catalysed reaction is ATP + H2O + a folded polypeptide = ADP + phosphate + an unfolded polypeptide.. Together with its co-chaperonin GroES, plays an essential role in assisting protein folding. The GroEL-GroES system forms a nano-cage that allows encapsulation of the non-native substrate proteins and provides a physical environment optimized to promote and accelerate protein folding. The sequence is that of Chaperonin GroEL 2 from Mycobacterium tuberculosis (strain ATCC 25177 / H37Ra).